We begin with the raw amino-acid sequence, 866 residues long: Probable outer membrane usher protein ElfC (866 aa).

Positions 1–35 are cleaved as a signal peptide; that stretch reads MYRTHRQHSLLSSGGVPSFIGGLVVFVSAAFNAQA.

The protein belongs to the fimbrial export usher family.

It is found in the cell outer membrane. Functionally, part of the elfADCG fimbrial operon, which could be required for adherence to host epithelial cells. Could be involved in the export and assembly of the ElfA fimbrial subunits across the outer membrane. In Escherichia coli O157:H7, this protein is Probable outer membrane usher protein ElfC (elfC).